Reading from the N-terminus, the 321-residue chain is Non-canonical heme oxygenase HOZ, chloroplastic (321 aa).

Residues 1–45 (MKSLVAHFSTPLITARLVPRCIIHRASISAVSFSTVRRRFSPLTM) constitute a chloroplast transit peptide. Positions 96–116 (CGMLSTFSQKYEGYPSGSMVD) are dimerization. Heme b-binding residues include S130, V134, and H135. Dimerization stretches follow at residues 144-166 (KCSL…LHGD) and 205-208 (KVVR).

As to quaternary structure, homodimer. Binds to heme in the interdimer interface; the heme iron is coordinated by a fixed water molecule.

The protein localises to the plastid. It is found in the chloroplast. Functionally, dimeric beta-barrel protein binding to heme and catalyzing its degradation to produce biliverdin. May function in the tetrapyrrole biosynthetic pathway. This is Non-canonical heme oxygenase HOZ, chloroplastic from Arabidopsis thaliana (Mouse-ear cress).